Reading from the N-terminus, the 214-residue chain is ATP-dependent Clp protease proteolytic subunit (214 aa).

The active-site Nucleophile is S114. H139 is an active-site residue.

It belongs to the peptidase S14 family. As to quaternary structure, fourteen ClpP subunits assemble into 2 heptameric rings which stack back to back to give a disk-like structure with a central cavity, resembling the structure of eukaryotic proteasomes.

The protein resides in the cytoplasm. The enzyme catalyses Hydrolysis of proteins to small peptides in the presence of ATP and magnesium. alpha-casein is the usual test substrate. In the absence of ATP, only oligopeptides shorter than five residues are hydrolyzed (such as succinyl-Leu-Tyr-|-NHMec, and Leu-Tyr-Leu-|-Tyr-Trp, in which cleavage of the -Tyr-|-Leu- and -Tyr-|-Trp bonds also occurs).. Its function is as follows. Cleaves peptides in various proteins in a process that requires ATP hydrolysis. Has a chymotrypsin-like activity. Plays a major role in the degradation of misfolded proteins. The polypeptide is ATP-dependent Clp protease proteolytic subunit (Nitrosomonas eutropha (strain DSM 101675 / C91 / Nm57)).